A 504-amino-acid chain; its full sequence is Maturase K (504 aa).

Belongs to the intron maturase 2 family. MatK subfamily.

It is found in the plastid. It localises to the chloroplast. Functionally, usually encoded in the trnK tRNA gene intron. Probably assists in splicing its own and other chloroplast group II introns. The polypeptide is Maturase K (Aucuba japonica (Japanese laurel)).